Reading from the N-terminus, the 993-residue chain is Vinculin (993 aa).

2 repeat units span residues 258 to 364 (DSDN…TKEI) and 373 to 480 (TNTQ…ELVD). The segment at 258–480 (DSDNVTVMRK…LRNKLRELVD (223 aa)) is 2 X repeats. The interval 730-797 (ITGAGGSRPP…PPPETDDEEE (68 aa)) is disordered. The span at 758 to 768 (VHDRIYIREDI) shows a compositional bias: basic and acidic residues. The span at 769–790 (PTPPRPPPPVEISPPPRPPPPP) shows a compositional bias: pro residues.

This sequence belongs to the vinculin/alpha-catenin family. As to quaternary structure, exhibits self-association properties.

The protein resides in the cytoplasm. The protein localises to the cytoskeleton. Its subcellular location is the cell junction. It is found in the adherens junction. It localises to the cell membrane. In terms of biological role, involved in cell adhesion. May be involved in the attachment of the actin-based microfilaments to the plasma membrane. The chain is Vinculin from Brugia malayi (Filarial nematode worm).